The chain runs to 314 residues: Fructose-1,6-bisphosphatase class 1 (314 aa).

Glu-91, Asp-112, Leu-114, and Asp-115 together coordinate Mg(2+). Residues 115 to 118, Tyr-223, and Lys-254 contribute to the substrate site; that span reads DGSS. Glu-260 contacts Mg(2+).

It belongs to the FBPase class 1 family. As to quaternary structure, homotetramer. It depends on Mg(2+) as a cofactor.

Its subcellular location is the cytoplasm. The catalysed reaction is beta-D-fructose 1,6-bisphosphate + H2O = beta-D-fructose 6-phosphate + phosphate. Its pathway is carbohydrate biosynthesis; gluconeogenesis. In Geobacter metallireducens (strain ATCC 53774 / DSM 7210 / GS-15), this protein is Fructose-1,6-bisphosphatase class 1.